The following is a 172-amino-acid chain: Phosphopantetheine adenylyltransferase (172 aa).

Substrate is bound at residue T13. Residues T13–F14 and H21 contribute to the ATP site. The substrate site is built by K45, L81, and R95. Residues G96 to R98, E106, and S131 to R137 each bind ATP.

Belongs to the bacterial CoaD family. In terms of assembly, homohexamer. Mg(2+) is required as a cofactor.

The protein resides in the cytoplasm. The enzyme catalyses (R)-4'-phosphopantetheine + ATP + H(+) = 3'-dephospho-CoA + diphosphate. Its pathway is cofactor biosynthesis; coenzyme A biosynthesis; CoA from (R)-pantothenate: step 4/5. Its function is as follows. Reversibly transfers an adenylyl group from ATP to 4'-phosphopantetheine, yielding dephospho-CoA (dPCoA) and pyrophosphate. This Rhodospirillum rubrum (strain ATCC 11170 / ATH 1.1.1 / DSM 467 / LMG 4362 / NCIMB 8255 / S1) protein is Phosphopantetheine adenylyltransferase.